The chain runs to 84 residues: Toxin Tf2 (84 aa).

The signal sequence occupies residues 1–20; the sequence is MKRFLLFISILMMIGTIVVG. Residues 21 to 83 enclose the LCN-type CS-alpha/beta domain; the sequence is KEGYAMDHEG…VWDYATNKCG (63 aa). Disulfide bonds link Cys31–Cys82, Cys35–Cys58, Cys43–Cys63, and Cys47–Cys65. Residue Cys82 is modified to Cysteine amide.

This sequence belongs to the long (4 C-C) scorpion toxin superfamily. Sodium channel inhibitor family. Beta subfamily. In terms of processing, contains 4 disulfide bonds. In terms of tissue distribution, expressed by the venom gland.

It is found in the secreted. Its function is as follows. Beta toxins bind voltage-independently at site-4 of sodium channels (Nav) and shift the voltage of activation toward more negative potentials thereby affecting sodium channel activation and promoting spontaneous and repetitive firing. This toxin is active against hNav1.3/SCN3A. The polypeptide is Toxin Tf2 (Tityus fasciolatus (Central Brazilian scorpion)).